Reading from the N-terminus, the 428-residue chain is Histidinol dehydrogenase (428 aa).

Residues Tyr-126, Gln-188, and Asn-211 each coordinate NAD(+). Residues Ser-234, Gln-256, and His-259 each coordinate substrate. Positions 256 and 259 each coordinate Zn(2+). Catalysis depends on proton acceptor residues Glu-324 and His-325. Positions 325, 358, 412, and 417 each coordinate substrate. Asp-358 contacts Zn(2+). His-417 serves as a coordination point for Zn(2+).

The protein belongs to the histidinol dehydrogenase family. Zn(2+) serves as cofactor.

It carries out the reaction L-histidinol + 2 NAD(+) + H2O = L-histidine + 2 NADH + 3 H(+). It participates in amino-acid biosynthesis; L-histidine biosynthesis; L-histidine from 5-phospho-alpha-D-ribose 1-diphosphate: step 9/9. Functionally, catalyzes the sequential NAD-dependent oxidations of L-histidinol to L-histidinaldehyde and then to L-histidine. In Chlorobium chlorochromatii (strain CaD3), this protein is Histidinol dehydrogenase.